A 260-amino-acid polypeptide reads, in one-letter code: Hydroxyethylthiazole kinase 1 (260 aa).

Met39 is a substrate binding site. Residues Arg115 and Thr160 each coordinate ATP. Gly187 contributes to the substrate binding site.

Belongs to the Thz kinase family. The cofactor is Mg(2+).

It carries out the reaction 5-(2-hydroxyethyl)-4-methylthiazole + ATP = 4-methyl-5-(2-phosphooxyethyl)-thiazole + ADP + H(+). It functions in the pathway cofactor biosynthesis; thiamine diphosphate biosynthesis; 4-methyl-5-(2-phosphoethyl)-thiazole from 5-(2-hydroxyethyl)-4-methylthiazole: step 1/1. In terms of biological role, catalyzes the phosphorylation of the hydroxyl group of 4-methyl-5-beta-hydroxyethylthiazole (THZ). The polypeptide is Hydroxyethylthiazole kinase 1 (Streptococcus pneumoniae (strain JJA)).